Consider the following 141-residue polypeptide: Hemoglobin subunit alpha (141 aa).

Residues 1 to 141 (VLSPDDKKHV…VSTVLTSKYR (141 aa)) form the Globin domain. The residue at position 3 (Ser-3) is a Phosphoserine. 2 positions are modified to N6-succinyllysine: Lys-7 and Lys-11. Lys-16 is subject to N6-acetyllysine; alternate. The residue at position 16 (Lys-16) is an N6-succinyllysine; alternate. Tyr-24 bears the Phosphotyrosine mark. Ser-35 carries the post-translational modification Phosphoserine. N6-succinyllysine is present on Lys-40. Ser-49 is modified (phosphoserine). His-58 is a binding site for O2. His-87 contributes to the heme b binding site. Position 102 is a phosphoserine (Ser-102). Thr-108 bears the Phosphothreonine mark. 2 positions are modified to phosphoserine: Ser-124 and Ser-131. Phosphothreonine occurs at positions 134 and 137. Position 138 is a phosphoserine (Ser-138).

It belongs to the globin family. Heterotetramer of two alpha chains and two beta chains. As to expression, red blood cells.

Involved in oxygen transport from the lung to the various peripheral tissues. Functionally, hemopressin acts as an antagonist peptide of the cannabinoid receptor CNR1. Hemopressin-binding efficiently blocks cannabinoid receptor CNR1 and subsequent signaling. This is Hemoglobin subunit alpha (HBA) from Cercocebus atys (Sooty mangabey).